Reading from the N-terminus, the 451-residue chain is tRNA-2-methylthio-N(6)-dimethylallyladenosine synthase (451 aa).

Positions 6–122 (RHYHITTFGC…LQDLLEQVFN (117 aa)) constitute an MTTase N-terminal domain. The [4Fe-4S] cluster site is built by Cys-15, Cys-51, Cys-85, Cys-157, Cys-161, and Cys-164. Positions 143–380 (RDSKITAWVN…NHLVGVKAAD (238 aa)) constitute a Radical SAM core domain. One can recognise a TRAM domain in the interval 383-447 (QRYMGRIEEV…PFSLTGEVKE (65 aa)).

Belongs to the methylthiotransferase family. MiaB subfamily. In terms of assembly, monomer. [4Fe-4S] cluster serves as cofactor.

Its subcellular location is the cytoplasm. The enzyme catalyses N(6)-dimethylallyladenosine(37) in tRNA + (sulfur carrier)-SH + AH2 + 2 S-adenosyl-L-methionine = 2-methylsulfanyl-N(6)-dimethylallyladenosine(37) in tRNA + (sulfur carrier)-H + 5'-deoxyadenosine + L-methionine + A + S-adenosyl-L-homocysteine + 2 H(+). Functionally, catalyzes the methylthiolation of N6-(dimethylallyl)adenosine (i(6)A), leading to the formation of 2-methylthio-N6-(dimethylallyl)adenosine (ms(2)i(6)A) at position 37 in tRNAs that read codons beginning with uridine. The protein is tRNA-2-methylthio-N(6)-dimethylallyladenosine synthase of Trichodesmium erythraeum (strain IMS101).